A 294-amino-acid chain; its full sequence is 4-hydroxy-tetrahydrodipicolinate synthase (294 aa).

A pyruvate-binding site is contributed by Thr47. Residue Tyr135 is the Proton donor/acceptor of the active site. Lys163 functions as the Schiff-base intermediate with substrate in the catalytic mechanism. Residue Thr205 participates in pyruvate binding.

Belongs to the DapA family. As to quaternary structure, homotetramer; dimer of dimers.

Its subcellular location is the cytoplasm. It carries out the reaction L-aspartate 4-semialdehyde + pyruvate = (2S,4S)-4-hydroxy-2,3,4,5-tetrahydrodipicolinate + H2O + H(+). It participates in amino-acid biosynthesis; L-lysine biosynthesis via DAP pathway; (S)-tetrahydrodipicolinate from L-aspartate: step 3/4. In terms of biological role, catalyzes the condensation of (S)-aspartate-beta-semialdehyde [(S)-ASA] and pyruvate to 4-hydroxy-tetrahydrodipicolinate (HTPA). This is 4-hydroxy-tetrahydrodipicolinate synthase from Rickettsia conorii (strain ATCC VR-613 / Malish 7).